Consider the following 334-residue polypeptide: Glyoxylate reductase (334 aa).

Residues L158–I161, S180–T182, and I239–R241 contribute to the NADP(+) site. Active-site residues include R241 and E270. The Proton donor role is filled by H288. Residue H288–G290 participates in NADP(+) binding.

It belongs to the D-isomer specific 2-hydroxyacid dehydrogenase family. GyaR subfamily. In terms of assembly, homodimer.

Its subcellular location is the cytoplasm. It carries out the reaction glycolate + NAD(+) = glyoxylate + NADH + H(+). The sequence is that of Glyoxylate reductase (gyaR) from Pyrococcus horikoshii (strain ATCC 700860 / DSM 12428 / JCM 9974 / NBRC 100139 / OT-3).